Here is a 98-residue protein sequence, read N- to C-terminus: NADH-ubiquinone oxidoreductase chain 4L (98 aa).

The next 3 membrane-spanning stretches (helical) occupy residues 1 to 21 (MSPVYFSFSSAFILGLMGLAF), 26 to 46 (LLSALLCLEGMMLSLFIAIAL), and 61 to 81 (MILLTFSACEASAGLALLVAA).

It belongs to the complex I subunit 4L family.

It localises to the mitochondrion membrane. It catalyses the reaction a ubiquinone + NADH + 5 H(+)(in) = a ubiquinol + NAD(+) + 4 H(+)(out). In terms of biological role, core subunit of the mitochondrial membrane respiratory chain NADH dehydrogenase (Complex I) which catalyzes electron transfer from NADH through the respiratory chain, using ubiquinone as an electron acceptor. Part of the enzyme membrane arm which is embedded in the lipid bilayer and involved in proton translocation. This Squalus acanthias (Spiny dogfish) protein is NADH-ubiquinone oxidoreductase chain 4L (MT-ND4L).